A 76-amino-acid chain; its full sequence is Repressor protein of division inhibition gene dicB (76 aa).

A DNA-binding region spans residues 13–33 (KTKLAQAAGIRLASLYSWKGD).

Functionally, this protein is a repressor of division inhibition gene dicB. This is Repressor protein of division inhibition gene dicB (dicC) from Escherichia coli (strain K12).